A 335-amino-acid chain; its full sequence is Phosphatidylcholine:ceramide cholinephosphotransferase 2 (335 aa).

Transmembrane regions (helical) follow at residues 60 to 80, 104 to 124, 136 to 156, 200 to 220, and 229 to 249; these read LTAF…LTVI, WSVG…IIFL, FLLG…TFLP, ILCG…MYFV, and LVIL…ALVV. H210 is an active-site residue. Catalysis depends on residues H253 and D257. A helical membrane pass occupies residues 258–278; it reads VLIAYWLTSHVFWSYHQIFEM. Topologically, residues 279 to 335 are cytoplasmic; that stretch reads RKDDRPQAPLSRLWWFWLCYWFESDVADGKLVNKWNWPLEGPQRMHTIMNRINYKLQ.

Belongs to the sphingomyelin synthase family.

It is found in the membrane. The enzyme catalyses an N-acylsphing-4-enine + a 1,2-diacyl-sn-glycero-3-phosphocholine = a sphingomyelin + a 1,2-diacyl-sn-glycerol. It catalyses the reaction an N-acyl-15-methylhexadecasphing-4-enine + a 1,2-diacyl-sn-glycero-3-phosphocholine = an N-acyl-15-methylhexadecasphing-4-enine-1-phosphocholine + a 1,2-diacyl-sn-glycerol. It functions in the pathway lipid metabolism; sphingolipid metabolism. Functionally, sphingomyelin synthases (SM synthase or SMS) synthesize the sphingolipid sphingomyelin (SM) through transfer of the phosphatidyl head group of 1,2-diacyl-sn-glycero-3-phosphocholine (phosphatidylcholine, PC) on to the primary hydroxyl of ceramide (N-acylsphingoid base), yielding 1,2-diacyl-sn-glycerol (diacylglycerol, DAG) as a side product. Functions as a bidirectional lipid cholinephosphotransferases capable of converting PC and ceramide to SM and DAG and vice versa depending on the respective levels of ceramide and DAG as phosphocholine acceptors, respectively. The chain is Phosphatidylcholine:ceramide cholinephosphotransferase 2 (sms-2) from Caenorhabditis elegans.